A 149-amino-acid polypeptide reads, in one-letter code: Ribonuclease H (149 aa).

Residues 1–143 enclose the RNase H type-1 domain; the sequence is MNAVEIYTDG…ADMLANRGVE (143 aa). 4 residues coordinate Mg(2+): D9, E47, D69, and D135.

This sequence belongs to the RNase H family. Monomer. The cofactor is Mg(2+).

The protein resides in the cytoplasm. The catalysed reaction is Endonucleolytic cleavage to 5'-phosphomonoester.. In terms of biological role, endonuclease that specifically degrades the RNA of RNA-DNA hybrids. This Albidiferax ferrireducens (strain ATCC BAA-621 / DSM 15236 / T118) (Rhodoferax ferrireducens) protein is Ribonuclease H.